A 367-amino-acid chain; its full sequence is MTSRNYLLLTPGPLTTSRTVKEAMLFDSCTWDDDYNIGVVEQIRQQLTELATASEGYTSVLLQGSGSYAVEAVLGSALGPQDKVLIVSNGAYGARMVEMAGLMGIAHHAYDCGEVARPDVQAIDAILNADPTISHIAMVHSETTTGMLNPIDEVGALAHRYGKTYIVDAMSSFGGIPMDIAALHIDYLISSANKCIQGVPGFAFVIAREQKLAACKGHSRSLSLDLYAQWRCMEDNHGKWRFTSPTHTVLAFAQALKELAKEGGVAARHQRYQQNQRSLVAGMRALGFNTLLDDELHSPIITAFYSPEDPQYRFSEFYRRLKEQGFVIYPGKVSQSDCFRIGNIGEVYAADITALLTAIRTAMYWMK.

Lys194 carries the N6-(pyridoxal phosphate)lysine modification.

This sequence belongs to the class-V pyridoxal-phosphate-dependent aminotransferase family. PhnW subfamily. Homodimer. Pyridoxal 5'-phosphate is required as a cofactor.

It catalyses the reaction (2-aminoethyl)phosphonate + pyruvate = phosphonoacetaldehyde + L-alanine. In terms of biological role, involved in phosphonate degradation. The protein is 2-aminoethylphosphonate--pyruvate transaminase of Salmonella heidelberg (strain SL476).